The following is a 430-amino-acid chain: Alpha-humulene synthase asR6 (430 aa).

Belongs to the terpene synthase family. Alpha-humulene synthase eupE subfamily. It depends on Mg(2+) as a cofactor.

It carries out the reaction (2E,6E)-farnesyl diphosphate = alpha-humulene + diphosphate. Its pathway is secondary metabolite biosynthesis; terpenoid biosynthesis. Its function is as follows. Alpha-humulene synthase; part of the gene cluster that mediates the biosynthesis of xenovulene A, an unusual meroterpenoid that has potent inhibitory effects on the human gamma-aminobutyrate A (GABAA) benzodiazepine receptor. The first step of xenovulene A biosynthesis is the biosynthesis of 3-methylorcinaldehyde performed by the non-reducing polyketide synthase aspks1. The salicylate hydroxylase asL1 then catalyzes the oxidative dearomatization of 3-methylorcinaldehyde to yield a dearomatized hydroxycyclohexadione. The 2-oxoglutarate-dependent dioxygenase asL3 further catalyzes the oxidative ring expansion to provide the first tropolone metabolite. The cytochrome P450 monooxygenase asR2 allows the synthesis of tropolone hemiacetal. In parallel, a previously unrecognised class of terpene cyclase, asR6, produces alpha-humulene from farnesylpyrophosphate (FPP). The putative Diels-Alderase asR5 probably catalyzes the formation of the tropolone-humulene skeleton by linking humulene and the polyketide moiety. Oxidative-ring contractions catalyzed by asL4 and asL6 then processively remove carbon atoms from the polyketide to yield xenovulene A. The polypeptide is Alpha-humulene synthase asR6 (Sarocladium schorii (Acremonium strictum (strain IMI 501407))).